Here is a 285-residue protein sequence, read N- to C-terminus: ATP synthase gamma chain (285 aa).

This sequence belongs to the ATPase gamma chain family. F-type ATPases have 2 components, CF(1) - the catalytic core - and CF(0) - the membrane proton channel. CF(1) has five subunits: alpha(3), beta(3), gamma(1), delta(1), epsilon(1). CF(0) has three main subunits: a, b and c.

The protein resides in the cell membrane. In terms of biological role, produces ATP from ADP in the presence of a proton gradient across the membrane. The gamma chain is believed to be important in regulating ATPase activity and the flow of protons through the CF(0) complex. This Dehalococcoides mccartyi (strain ATCC BAA-2266 / KCTC 15142 / 195) (Dehalococcoides ethenogenes (strain 195)) protein is ATP synthase gamma chain.